We begin with the raw amino-acid sequence, 135 residues long: Bacilliredoxin CHU_0972 (135 aa).

It belongs to the bacilliredoxin family.

The sequence is that of Bacilliredoxin CHU_0972 from Cytophaga hutchinsonii (strain ATCC 33406 / DSM 1761 / CIP 103989 / NBRC 15051 / NCIMB 9469 / D465).